The chain runs to 239 residues: Ribonuclease PH (239 aa).

Phosphate contacts are provided by residues Arg86 and 124 to 126; that span reads GTR.

The protein belongs to the RNase PH family. In terms of assembly, homohexameric ring arranged as a trimer of dimers.

The catalysed reaction is tRNA(n+1) + phosphate = tRNA(n) + a ribonucleoside 5'-diphosphate. Its function is as follows. Phosphorolytic 3'-5' exoribonuclease that plays an important role in tRNA 3'-end maturation. Removes nucleotide residues following the 3'-CCA terminus of tRNAs; can also add nucleotides to the ends of RNA molecules by using nucleoside diphosphates as substrates, but this may not be physiologically important. Probably plays a role in initiation of 16S rRNA degradation (leading to ribosome degradation) during starvation. The chain is Ribonuclease PH from Rhizobium etli (strain CIAT 652).